The primary structure comprises 878 residues: Alanine--tRNA ligase (878 aa).

Zn(2+) contacts are provided by H562, H566, C670, and H674.

Belongs to the class-II aminoacyl-tRNA synthetase family. The cofactor is Zn(2+).

It localises to the cytoplasm. It carries out the reaction tRNA(Ala) + L-alanine + ATP = L-alanyl-tRNA(Ala) + AMP + diphosphate. Its function is as follows. Catalyzes the attachment of alanine to tRNA(Ala) in a two-step reaction: alanine is first activated by ATP to form Ala-AMP and then transferred to the acceptor end of tRNA(Ala). Also edits incorrectly charged Ser-tRNA(Ala) and Gly-tRNA(Ala) via its editing domain. This chain is Alanine--tRNA ligase, found in Acinetobacter baumannii (strain ACICU).